A 316-amino-acid polypeptide reads, in one-letter code: Beta-galactosidase small subunit (316 aa).

This sequence belongs to the bacterial beta-galactosidase small subunit family. Heterodimer of a large (LacL) and a small subunit (LacM).

It catalyses the reaction Hydrolysis of terminal non-reducing beta-D-galactose residues in beta-D-galactosides.. Component of a beta-galactosidase. The chain is Beta-galactosidase small subunit (lacM) from Lactobacillus acidophilus (strain ATCC 700396 / NCK56 / N2 / NCFM).